The sequence spans 632 residues: Nucleoside triphosphatase I (632 aa).

Positions 42 to 204 (FLGLDKMHSL…IMLVNLLRPK (163 aa)) constitute a Helicase ATP-binding domain. 55–62 (HETGVGKT) contributes to the ATP binding site. Residues 141–144 (DECH) carry the DEXH box motif. A Helicase C-terminal domain is found at 367–532 (KFTDVCLRIL…EFTQLFKVFK (166 aa)). The binding to the cap-specific mRNA (nucleoside-2'-O-)-methyltransferase stretch occupies residues 457-524 (DIFILDMTWN…DIIRNKSKEF (68 aa)).

Belongs to the helicase family. NPH I subfamily. As to quaternary structure, monomer. Interacts (via C-terminus) with RAP94 (via N-terminus). Interacts with the cap-specific mRNA (nucleoside-2'-O-)-methyltransferase.

Its subcellular location is the virion. It catalyses the reaction a ribonucleoside 5'-triphosphate + H2O = a ribonucleoside 5'-diphosphate + phosphate + H(+). In terms of biological role, DNA-dependent ATPase required for providing the needed energy to achieve the termination of early transcripts. Acts in concert with the RAP94 subunit of the virion RNA polymerase and the capping enzyme/VTF to catalyze release of UUUUUNU-containing nascent RNA from the elongation complex. NPH-I must bind ssDNA in order to exhibit ATPase activity. The protein is Nucleoside triphosphatase I (NPH1) of Rabbit fibroma virus (strain Kasza) (RFV).